The sequence spans 444 residues: E3 ubiquitin-protein ligase RNFT2 (444 aa).

At 1-181 the chain is on the extracellular side; it reads MWLFTVNQVL…ILLAKLCFQH (181 aa). Disordered stretches follow at residues 13–41 and 92–149; these read MQRR…ASVD and PASR…PGTP. Basic residues predominate over residues 107–121; it reads YHHRQPHHHFHHGGH. Over residues 131–140 the composition is skewed to basic and acidic residues; that stretch reads GGDHRGHSEE. A helical membrane pass occupies residues 182-202; sequence KLGIAVCIGMASTFAYANSTL. Residues 203 to 214 lie on the Cytoplasmic side of the membrane; sequence REQVSLKEKRSV. Residues 215–235 form a helical membrane-spanning segment; that stretch reads LVILWILAFLAGNTLYVLYTF. The Extracellular portion of the chain corresponds to 236–255; sequence SSQQLYNSLIFLKPNLEMLD. Residues 256-276 traverse the membrane as a helical segment; the sequence is FFDLLWIVGIADFVLKYITIA. The Cytoplasmic portion of the chain corresponds to 277–329; the sequence is LKCLIVALPKIILAVKSKGKFYLVIEELSQLFRSLVPIQLWYKYIMGDDSSNS. The chain crosses the membrane as a helical span at residues 330–350; it reads YFLGGVLIVLYSLCKSFDICG. The Extracellular segment spans residues 351 to 444; sequence RVGGVRKALK…GATSAHFQVY (94 aa). The segment at 384–422 adopts an RING-type zinc-finger fold; sequence CAICQAEFREPLILLCQHVFCEECLCLWLDRERTCPLCR.

The protein localises to the membrane. Its function is as follows. E3 ubiquitin-protein ligase that negatively regulates IL3-dependent cellular responses through IL3RA ubiquitination and degradation by the proteasome, having an anti-inflammatory effect. The sequence is that of E3 ubiquitin-protein ligase RNFT2 from Homo sapiens (Human).